A 550-amino-acid chain; its full sequence is MFCVQCEQTIRTPAGNGCSYAQGMCGKTAETSDLQDLLIATLQGLSAWAVKAREYGIINHDVDSFAPRAFFSTLTNVNFDSPRIVGYAREAIALREALKAQCLAVDANARVDNPMADLQLVSDDLGELQRQAAEFTPNKDKAAIGENILGLRLLCLYGLKGAAAYMEHAHVLGQYDNDIYAQYHKIMAWLGTWPADMNALLECSMEIGQMNFKVMSILDAGETGKYGHPTPTQVNVKATAGKCILISGHDLKDLYNLLEQTEGTGVNVYTHGEMLPAHGYPELRKFKHLVGNYGSGWQNQQVEFARFPGPIVMTSNCIIDPTVGAYDDRIWTRSIVGWPGVRHLDGEDFSAVIAQAQQMAGFPYSEIPHLITVGFGRQTLLGAADTLIDLVSREKLRHIFLLGGCDGARGERHYFTDFATSVPDDCLILTLACGKYRFNKLEFGDIEGLPRLVDAGQCNDAYSAIILAVTLAEKLGCGVNDLPLSLVLSWFEQKAIVILLTLLSLGVKNIVTGPTAPGFLTPDLLAVLNEKFGLRSITTVEEDMKQLLSA.

Residues Cys3, Cys6, Cys18, and Cys25 each contribute to the [2Fe-2S] cluster site. Hybrid [4Fe-2O-2S] cluster is bound by residues His249, Glu273, Cys317, Cys405, Cys433, Cys458, Glu492, and Lys494. Cys405 bears the Cysteine persulfide mark.

Belongs to the HCP family. [2Fe-2S] cluster is required as a cofactor. Requires hybrid [4Fe-2O-2S] cluster as cofactor.

Its subcellular location is the cytoplasm. It catalyses the reaction A + NH4(+) + H2O = hydroxylamine + AH2 + H(+). In terms of biological role, catalyzes the reduction of hydroxylamine to form NH(3) and H(2)O. The sequence is that of Hydroxylamine reductase from Escherichia coli O6:H1 (strain CFT073 / ATCC 700928 / UPEC).